A 104-amino-acid polypeptide reads, in one-letter code: Large ribosomal subunit protein bL21 (104 aa).

The protein belongs to the bacterial ribosomal protein bL21 family. As to quaternary structure, part of the 50S ribosomal subunit. Contacts protein L20.

This protein binds to 23S rRNA in the presence of protein L20. This is Large ribosomal subunit protein bL21 from Francisella tularensis subsp. holarctica (strain FTNF002-00 / FTA).